The chain runs to 142 residues: Large ribosomal subunit protein uL13 (142 aa).

The protein belongs to the universal ribosomal protein uL13 family. Part of the 50S ribosomal subunit.

This protein is one of the early assembly proteins of the 50S ribosomal subunit, although it is not seen to bind rRNA by itself. It is important during the early stages of 50S assembly. In Aliivibrio salmonicida (strain LFI1238) (Vibrio salmonicida (strain LFI1238)), this protein is Large ribosomal subunit protein uL13.